A 151-amino-acid polypeptide reads, in one-letter code: MNCIKQFLLAICFSLALTCQDHVLVGGTTTRDIIVPKISEWQVTVVNGLTTGETLFIHCKSKEDDLGEINLKFRNRFSWNFGENMLHSTFFWCYMNKDNGHMNVNVFWDDVILFHRCGWKNCIWTAKTDGLYLWNSASGEDVLSRKWEVGW.

Positions 1-18 (MNCIKQFLLAICFSLALT) are cleaved as a signal peptide.

It belongs to the plant self-incompatibility (S1) protein family. As to expression, restricted to floral tissues.

Its subcellular location is the secreted. This Arabidopsis thaliana (Mouse-ear cress) protein is S-protein homolog 1.